The sequence spans 143 residues: Endoribonuclease YbeY (143 aa).

3 residues coordinate Zn(2+): His-106, His-110, and His-116.

Belongs to the endoribonuclease YbeY family. Zn(2+) is required as a cofactor.

The protein localises to the cytoplasm. Functionally, single strand-specific metallo-endoribonuclease involved in late-stage 70S ribosome quality control and in maturation of the 3' terminus of the 16S rRNA. The chain is Endoribonuclease YbeY from Petrotoga mobilis (strain DSM 10674 / SJ95).